A 268-amino-acid chain; its full sequence is Casein kinase II subunit beta (268 aa).

The interval 222–268 (LSNNNQNNQNNNINNNNNNNNNNNNNNNNNNNNQQNNNNQQNNNTNK) is disordered. Residues 224 to 268 (NNNQNNQNNNINNNNNNNNNNNNNNNNNNNNQQNNNNQQNNNTNK) show a composition bias toward low complexity.

Belongs to the casein kinase 2 subunit beta family. In terms of assembly, casein kinase II/CK2 is a tetramer composed of two alpha subunit and two beta subunits.

Regulatory subunit of casein kinase II/CK2. As part of the kinase complex regulates the basal catalytic activity of the alpha subunit a constitutively active serine/threonine-protein kinase that phosphorylates a large number of substrates containing acidic residues C-terminal to the phosphorylated serine or threonine. The chain is Casein kinase II subunit beta (csnk2b) from Dictyostelium discoideum (Social amoeba).